A 126-amino-acid polypeptide reads, in one-letter code: Large ribosomal subunit protein bL17 (126 aa).

It belongs to the bacterial ribosomal protein bL17 family. Part of the 50S ribosomal subunit. Contacts protein L32.

The protein is Large ribosomal subunit protein bL17 of Aliivibrio fischeri (strain ATCC 700601 / ES114) (Vibrio fischeri).